We begin with the raw amino-acid sequence, 236 residues long: Cancer/testis antigen 55 (236 aa).

The segment at 57–84 (RSSADVETGDNPLKAEPNLPAAVEEQSP) is disordered.

In terms of assembly, interacts with GABARAP; this interaction may be important for GABARAP protein stability. Interacts with LAMP2; this interaction may be important for LAMP2 protein stability. In terms of tissue distribution, expressed in spermatozoa (at protein level).

It localises to the cytoplasm. The protein localises to the cytoplasmic vesicle. Its subcellular location is the secretory vesicle. The protein resides in the acrosome. It is found in the cell projection. It localises to the cilium. The protein localises to the flagellum. Plays a role in spermatogenesis, possibly acting in the regulation of the autophagy pathway. This is Cancer/testis antigen 55 (Ct55) from Mus musculus (Mouse).